Reading from the N-terminus, the 307-residue chain is Serine/threonine-protein phosphatase 4 catalytic subunit (307 aa).

Mn(2+) is bound by residues aspartate 54, histidine 56, aspartate 82, and asparagine 114. Residue histidine 115 is the Proton donor of the active site. Histidine 164 and histidine 238 together coordinate Mn(2+). Residue leucine 307 is modified to Leucine methyl ester.

The protein belongs to the PPP phosphatase family. PP-4 (PP-X) subfamily. As to quaternary structure, serine/threonine-protein phosphatase 4 (PP4) occurs in different assemblies of the catalytic and one or more regulatory subunits. The cofactor is Mn(2+).

The protein localises to the cytoplasm. It is found in the nucleus. Its subcellular location is the cytoskeleton. The protein resides in the microtubule organizing center. It localises to the centrosome. The catalysed reaction is O-phospho-L-seryl-[protein] + H2O = L-seryl-[protein] + phosphate. It catalyses the reaction O-phospho-L-threonyl-[protein] + H2O = L-threonyl-[protein] + phosphate. Protein phosphatase that regulates many processes such as microtubule organization at centrosomes. This Xenopus laevis (African clawed frog) protein is Serine/threonine-protein phosphatase 4 catalytic subunit (ppp4c).